Reading from the N-terminus, the 393-residue chain is MGRGACVPSAASGAGDRARQLGAVLGALCLFPALVLLAWPGTPANGAGARVAQGDAAPQTSGVLASGSLGPPHPPVPRRRRYTLTPARLRWEHFNLTYKILSFPRNLLSPSETRRGLAAAFRMWSDVSPFSFREVAPEQPSDLRIGFYPVNHTDCLVSPLHHCFDGPTGELAHAFFPPHGGIHFDDSEYWVLGRTRYSWKKGVWLTDLVHVAAHEIGHALGLMHSQHGRALMHLNATLRGWKALSQDELWGLHRLYGCLDRLFVCASWARRGFCDTRRRLMKRLCPSSCDFCYEFPFPTVAATPPPPRTKTKLVPEGRNVTFRCGQKILHKKGKVYWYKDQEPLEFSYPGYLALGEAHLSIIANAINEGTYTCVVRRRQRVLSTYSWRIRVRS.

At 1–20 (MGRGACVPSAASGAGDRARQ) the chain is on the cytoplasmic side. The propeptide occupies 1–81 (MGRGACVPSA…PHPPVPRRRR (81 aa)). Residues 21–41 (LGAVLGALCLFPALVLLAWPG) traverse the membrane as a helical; Signal-anchor for type II membrane protein segment. Residues 42-393 (TPANGAGARV…TYSWRIRVRS (352 aa)) are Lumenal-facing. Residues 60 to 79 (TSGVLASGSLGPPHPPVPRR) are disordered. Residues N95 and N151 are each glycosylated (N-linked (GlcNAc...) asparagine). A Zn(2+)-binding site is contributed by H214. The active site involves E215. Residues H218 and H224 each coordinate Zn(2+). N235 carries an N-linked (GlcNAc...) asparagine glycan. Residues 258–292 (CLDRLFVCASWARRGFCDTRRRLMKRLCPSSCDFC) form the ShKT domain. Cystine bridges form between C258-C292, C265-C285, and C274-C289. The Ig-like C2-type domain occupies 298–383 (PTVAATPPPP…VVRRRQRVLS (86 aa)). An N-linked (GlcNAc...) asparagine glycan is attached at N319. Residues C324 and C373 are joined by a disulfide bond.

Belongs to the peptidase M10A family. Requires Zn(2+) as cofactor. N-glycosylated. Post-translationally, proteolytic cleavage might yield an active form.

It localises to the membrane. The protein localises to the endoplasmic reticulum membrane. Functionally, protease. May regulate the surface expression of some potassium channels by retaining them in the endoplasmic reticulum. The chain is Matrix metalloproteinase-23 (MMP23) from Bos taurus (Bovine).